A 318-amino-acid polypeptide reads, in one-letter code: Carbamate kinase (318 aa).

The protein belongs to the carbamate kinase family.

The protein localises to the cytoplasm. It carries out the reaction hydrogencarbonate + NH4(+) + ATP = carbamoyl phosphate + ADP + H2O + H(+). It functions in the pathway metabolic intermediate metabolism; carbamoyl phosphate degradation; CO(2) and NH(3) from carbamoyl phosphate: step 1/1. This is Carbamate kinase (arcC) from Lentilactobacillus hilgardii (Lactobacillus hilgardii).